Reading from the N-terminus, the 169-residue chain is PTS system glucose-specific EIIA component (169 aa).

The region spanning 39–143 is the PTS EIIA type-1 domain; the sequence is DVVFAEKIVG…STLTPVVISN (105 aa). Zn(2+)-binding residues include His76 and His91. The active-site Tele-phosphohistidine intermediate; for EIIA activity is His91. His91 carries the post-translational modification Phosphohistidine; by HPr.

In terms of assembly, heterodimer with glycerol kinase (glpk). It depends on Zn(2+) as a cofactor.

The protein resides in the cytoplasm. Functionally, the phosphoenolpyruvate-dependent sugar phosphotransferase system (sugar PTS), a major carbohydrate active transport system, catalyzes the phosphorylation of incoming sugar substrates concomitantly with their translocation across the cell membrane. The enzyme II complex composed of PtsG and Crr is involved in glucose transport. The protein is PTS system glucose-specific EIIA component (crr) of Salmonella typhi.